We begin with the raw amino-acid sequence, 389 residues long: Flap endonuclease 1 (389 aa).

Residues M1–R105 are N-domain. Residue D34 coordinates Mg(2+). Residue R71 coordinates DNA. 5 residues coordinate Mg(2+): D87, E159, E161, D180, and D182. Residues E123 to H254 are I-domain. E159 lines the DNA pocket. Residues G232 and D234 each contribute to the DNA site. D234 lines the Mg(2+) pocket. The interval S338 to F346 is interaction with PCNA. Positions I356 to N389 are disordered.

The protein belongs to the XPG/RAD2 endonuclease family. FEN1 subfamily. As to quaternary structure, interacts with PCNA. Three molecules of FEN1 bind to one PCNA trimer with each molecule binding to one PCNA monomer. PCNA stimulates the nuclease activity without altering cleavage specificity. Requires Mg(2+) as cofactor. Phosphorylated. Phosphorylation upon DNA damage induces relocalization to the nuclear plasma.

Its subcellular location is the nucleus. It is found in the nucleolus. The protein localises to the nucleoplasm. It localises to the mitochondrion. Its function is as follows. Structure-specific nuclease with 5'-flap endonuclease and 5'-3' exonuclease activities involved in DNA replication and repair. During DNA replication, cleaves the 5'-overhanging flap structure that is generated by displacement synthesis when DNA polymerase encounters the 5'-end of a downstream Okazaki fragment. It enters the flap from the 5'-end and then tracks to cleave the flap base, leaving a nick for ligation. Also involved in the long patch base excision repair (LP-BER) pathway, by cleaving within the apurinic/apyrimidinic (AP) site-terminated flap. Acts as a genome stabilization factor that prevents flaps from equilibrating into structures that lead to duplications and deletions. Also possesses 5'-3' exonuclease activity on nicked or gapped double-stranded DNA, and exhibits RNase H activity. Also involved in replication and repair of rDNA and in repairing mitochondrial DNA. The chain is Flap endonuclease 1 from Ostreococcus lucimarinus (strain CCE9901).